Here is a 142-residue protein sequence, read N- to C-terminus: MERTLLLVKPDGVNRGLSGEILGRMEKLGLKLIGLRMLQMDAVLADKHYAPHRARPFFKDLVTYITSGPITAAVFEGENAVEKMRKAMGATDPAKSEKGTVRGDLGIDIEQNTVHGSDSAENAKHEISLFFSESELVNYDRR.

ATP-binding residues include K9, F57, R85, T91, R102, and N112. H115 (pros-phosphohistidine intermediate) is an active-site residue.

It belongs to the NDK family. As to quaternary structure, homotetramer. Mg(2+) serves as cofactor.

The protein localises to the cytoplasm. It catalyses the reaction a 2'-deoxyribonucleoside 5'-diphosphate + ATP = a 2'-deoxyribonucleoside 5'-triphosphate + ADP. The catalysed reaction is a ribonucleoside 5'-diphosphate + ATP = a ribonucleoside 5'-triphosphate + ADP. In terms of biological role, major role in the synthesis of nucleoside triphosphates other than ATP. The ATP gamma phosphate is transferred to the NDP beta phosphate via a ping-pong mechanism, using a phosphorylated active-site intermediate. The protein is Nucleoside diphosphate kinase of Dehalococcoides mccartyi (strain ATCC BAA-2100 / JCM 16839 / KCTC 5957 / BAV1).